The following is a 138-amino-acid chain: ATP synthase epsilon chain (138 aa).

It belongs to the ATPase epsilon chain family. As to quaternary structure, F-type ATPases have 2 components, CF(1) - the catalytic core - and CF(0) - the membrane proton channel. CF(1) has five subunits: alpha(3), beta(3), gamma(1), delta(1), epsilon(1). CF(0) has three main subunits: a, b and c.

The protein resides in the cell inner membrane. Functionally, produces ATP from ADP in the presence of a proton gradient across the membrane. This is ATP synthase epsilon chain from Polaromonas sp. (strain JS666 / ATCC BAA-500).